A 970-amino-acid chain; its full sequence is MSLPLRHALENVTSVDRILEDLLVRFIINCPNEDLSSVERELFHFEEASWFYTDFIKLMNPTLPSLKIKSFAQLIIKLCPLVWKWDIRVDEALQQFSKYKKSIPVRGAAIFNENLSKILLVQGTESDSWSFPRGKISKDENDIDCCIREVKEEIGFDLTDYIDDNQFIERNIQGKNYKIFLISGVSEVFNFKPQVRNEIDKIEWFDFKKISKTMYKSNIKYYLINSMMRPLSMWLRHQRQIKNEDQLKSYAEEQLKLLLGITKEEQIDPGRELLNMLHTAVQANSNNNAVSNGQVPSSQELQHLKEQSGEHNQQKDQQSSFSSQQQPSIFPSLSEPFANNKNVIPPTMPMANVFMSNPQLFATMNGQPFAPFPFMLPLTNNSNSANPIPTPVPPNFNAPPNPMAFGVPNMHNLSGPAVSQPFSLPPAPLPRDSGYSSSSPGQLLDILNSKKPDSNVQSSKKPKLKILQRGTDLNSIKQNNNDETAHSNSQALLDLLKKPTSSQKIHASKPDTSFLPNDSVSGIQDAEYEDFESSSDEEVETARDERNSLNVDIGVNVMPSEKDSRRSQKEKPRNDASKTNLNASAESNSVEWGPGKSSPSTQSKQNSSVGMQNKYRQEIHIGDSDAYEVFESSSDEEDGKKLEELEQTQDNSKLISQDILKENNFQDGEVPHRDMPTESNKSINETVGLSSTTNTVKKVPKVKILKRGETFASLANDKKAFDSSSNVSSSKDLLQMLRNPISSTVSSNQQSPKSQHLSGDEEIMMMLKRNSVSKPQNSEENASTSSINDANASELLGMLKQKEKDITAPKQPYNVDSYSQKNSAKGLLNILKKNDSTGYPRTEGGPSSEMSTSMKRNDATNNQELDKNSTELLNYLKPKPLNDGYENISNKDSSHELLNILHGNKNSSAFNNNVYATDGYSLASDNNENSSNKLLNMLQNRSSAINEPNFDVRSNGTSGSNELLSILHRK.

A Nudix hydrolase domain is found at 101–228 (KSIPVRGAAI…IKYYLINSMM (128 aa)). The residue at position 116 (S116) is a Phosphoserine. The Nudix box signature appears at 134 to 155 (GKISKDENDIDCCIREVKEEIG). Positions 149 and 153 each coordinate Mn(2+). A compositionally biased stretch (basic and acidic residues) spans 302 to 314 (QHLKEQSGEHNQQ). Disordered stretches follow at residues 302 to 341 (QHLKEQSGEHNQQKDQQSSFSSQQQPSIFPSLSEPFANNK), 417 to 465 (AVSQ…PKLK), 501 to 520 (SSQKIHASKPDTSFLPNDSV), and 528 to 692 (YEDF…LSST). Residues 315–334 (KDQQSSFSSQQQPSIFPSLS) show a composition bias toward low complexity. S439 is modified (phosphoserine). Positions 528-539 (YEDFESSSDEEV) are enriched in acidic residues. Over residues 560–576 (SEKDSRRSQKEKPRNDA) the composition is skewed to basic and acidic residues. A compositionally biased stretch (polar residues) spans 577-590 (SKTNLNASAESNSV). Low complexity predominate over residues 596-608 (KSSPSTQSKQNSS). The segment covering 625 to 637 (DAYEVFESSSDEE) has biased composition (acidic residues). T677 is modified (phosphothreonine). The span at 677-691 (TESNKSINETVGLSS) shows a compositional bias: polar residues. Phosphoserine is present on residues S679, S682, S751, S771, S773, and S778. The tract at residues 831-867 (LKKNDSTGYPRTEGGPSSEMSTSMKRNDATNNQELDK) is disordered. Polar residues predominate over residues 848-863 (SEMSTSMKRNDATNNQ).

It belongs to the Nudix hydrolase family. DCP2 subfamily. As to quaternary structure, component of the decapping complex composed of DCP1 and DCP2. Interacts with mRNA, LSM2, LSM4 and LSM8. Interacts with EDC3. It depends on Mn(2+) as a cofactor.

Its subcellular location is the cytoplasm. It localises to the P-body. The catalysed reaction is a 5'-end (N(7)-methyl 5'-triphosphoguanosine)-ribonucleoside in mRNA + H2O = N(7)-methyl-GDP + a 5'-end phospho-ribonucleoside in mRNA + 2 H(+). Its function is as follows. Catalytic component of the decapping complex necessary for the degradation of mRNAs, both in normal mRNA turnover and in nonsense-mediated mRNA decay. Removes the 7-methyl guanine cap structure from mRNA molecules, yielding a 5'-phosphorylated mRNA fragment and 7m-GDP. Decapping is the major pathway of mRNA degradation in yeast and occurs through deadenylation, decapping and subsequent 5' to 3' exonucleolytic decay of the transcript body. Blocks autophagy in nutrient-rich conditions by repressing the expression of ATG-related genes through degradation of their transcripts. This is m7GpppN-mRNA hydrolase from Saccharomyces cerevisiae (strain ATCC 204508 / S288c) (Baker's yeast).